The following is a 449-amino-acid chain: MSDHDYDVVIIGGGPAGSTMASYLAKAGVKCAVFEKELFEREHVGESLVPATTPVLLEIGVMEKIEKANFPKKFGAAWTSADSGPEDKMGFQGLDHDFRSAEILFNERKQEGVDRDFTFHVDRGKFDRILLEHAGSLGAKVFQGVEIADVEFLSPGNVIVNAKLGKRSVEIKAKMVVDASGRNVLLGRRLGLREKDPVFNQFAIHSWFDNFDRKSATQSPDKVDYIFIHFLPMTNTWVWQIPITETITSVGVVTQKQNYTNSDLTYEEFFWEAVKTRENLHDALKASEQVRPFKKEADYSYGMKEVCGDSFVLIGDAARFVDPIFSSGVSVALNSARIASGDIIEAVKNNDFSKSSFTHYEGMIRNGIKNWYEFITLYYRLNILFTAFVQDPRYRLDILQLLQGDVYSGKRLEVLDKMREIIAAVESDPEHLWHKYLGDMQVPTAKPAF.

FAD contacts are provided by alanine 16, glutamate 35, arginine 41, histidine 43, valine 44, serine 47, arginine 123, isoleucine 147, and aspartate 316. Residues serine 327 and glycine 328 each coordinate chloride. An FAD-binding site is contributed by valine 329.

This sequence belongs to the flavin-dependent halogenase family. Homodimer.

It carries out the reaction (1H-pyrrole-2-carbonyl)-[peptidyl-carrier protein] + 2 FADH2 + 2 chloride + 2 O2 = (4,5-dichloro-1H-pyrrole-2-carbonyl)-[peptidyl-carrier protein] + 2 FAD + 4 H2O. The enzyme catalyses (1H-pyrrole-2-carbonyl)-[peptidyl-carrier protein] + FADH2 + chloride + O2 = (5-chloro-1H-pyrrole-2-carbonyl)-[peptidyl-carrier protein] + FAD + 2 H2O. The catalysed reaction is (5-chloro-1H-pyrrole-2-carbonyl)-[peptidyl-carrier protein] + FADH2 + chloride + O2 = (4,5-dichloro-1H-pyrrole-2-carbonyl)-[peptidyl-carrier protein] + FAD + 2 H2O. The protein operates within antibiotic biosynthesis. Functionally, involved in the biosynthesis of the antibiotic pyoluteorin. Catalyzes the dichlorination of the pyrrole ring of pyrrolyl-S-PltL, generating the 5-chloropyrrolyl-S-PltL intermediate and then the 4,5-dichloropyrrolyl-S-PltL product. The protein is 1H-pyrrole-2-carbonyl-[peptidyl-carrier protein] chlorinase of Pseudomonas fluorescens (strain ATCC BAA-477 / NRRL B-23932 / Pf-5).